We begin with the raw amino-acid sequence, 280 residues long: Protein YIP4b (280 aa).

Residues 1 to 15 (MSHNDTIPLYQSSQS) show a composition bias toward polar residues. Positions 1-106 (MSHNDTIPLY…SGFGSPPNTL (106 aa)) are disordered. Residues 1–146 (MSHNDTIPLY…DPGKALRDWD (146 aa)) are Cytoplasmic-facing. The helical transmembrane segment at 147–167 (LWGPFFFIVFLGLTLSWSASV) threads the bilayer. At 168–171 (KKSE) the chain is on the lumenal side. 2 helical membrane-spanning segments follow: residues 172 to 192 (VFAVAFALLAAGAVILTLNVL) and 193 to 213 (LLGGHIIFFQSLSLLGYCLFP). At 214–230 (LDVGAVICMLKDNVILK) the chain is on the lumenal side. A helical membrane pass occupies residues 231–251 (MVVVSVTLAWSSWAAYPFMSA). The Cytoplasmic segment spans residues 252–258 (AVNPRRK). The helical transmembrane segment at 259 to 279 (ALALYPVFLMYVSVGFLIIAI) threads the bilayer. Position 280 (N280) is a topological domain, lumenal.

Belongs to the YIP1 family. As to quaternary structure, homodimer and heterodimer with YIP4A. Component of a trans-Golgi network (TGN)-localized ECH/YIP4 complex made of ECH, YIP4A and YIP4B. Interacts directly with ECH. In terms of tissue distribution, expressed in developing root hair cells.

The protein localises to the golgi apparatus. It localises to the trans-Golgi network membrane. In terms of biological role, together with YIP4A, involved in the regulation of cell elongation during root and hypocotyl growth. YIP4A and YIP4B are central trafficking components in Rho-of-plant (ROPs, e.g. ARAC4/ROP2, ARAC5/ROP4 and ARAC3/ROP6) small GTPases-dependent root hair formation, thus contributing to activation and plasma membrane accumulation of ROPs during hair initiation. The ECH/YIP4 complex is involved in the modulation of the trans-Golgi network (TGN)-mediated trafficking of some proteins and cell wall components (e.g. pectin and hemicellulose) to the cell wall in dark-grown hypocotyls and in secretory cells of the seed coat. The chain is Protein YIP4b from Arabidopsis thaliana (Mouse-ear cress).